Consider the following 216-residue polypeptide: MNMDFTDQRLSYEKGQLDQQSVPISPFELLKAWMHEAIEEQVQEPYAMSLATCGADDKPSVRIVLLREITDKGIVFYTNYESAKGQDIAENPNAEALFFWHKLERQIRISGSIAKIDADKSAAYFQKRPHDSQVGTWVSQPQSGEVASRDVMEQTFEQLQTDYPDGAAVPTPGFWGGYEITVSEIEFWQGRANRMHDRIVYHKEVDGSFSTKRLLP.

Substrate is bound by residues 9–12 (RLSY) and Arg-67. Residues 62 to 67 (RIVLLR), 77 to 78 (YT), Lys-84, and Gln-106 each bind FMN. Positions 124, 128, and 132 each coordinate substrate. FMN is bound by residues 142 to 143 (QS) and Trp-188. 194-196 (RMH) contacts substrate. Arg-198 contacts FMN.

It belongs to the pyridoxamine 5'-phosphate oxidase family. As to quaternary structure, homodimer. FMN serves as cofactor.

It carries out the reaction pyridoxamine 5'-phosphate + O2 + H2O = pyridoxal 5'-phosphate + H2O2 + NH4(+). The catalysed reaction is pyridoxine 5'-phosphate + O2 = pyridoxal 5'-phosphate + H2O2. It functions in the pathway cofactor metabolism; pyridoxal 5'-phosphate salvage; pyridoxal 5'-phosphate from pyridoxamine 5'-phosphate: step 1/1. The protein operates within cofactor metabolism; pyridoxal 5'-phosphate salvage; pyridoxal 5'-phosphate from pyridoxine 5'-phosphate: step 1/1. Functionally, catalyzes the oxidation of either pyridoxine 5'-phosphate (PNP) or pyridoxamine 5'-phosphate (PMP) into pyridoxal 5'-phosphate (PLP). This Psychrobacter arcticus (strain DSM 17307 / VKM B-2377 / 273-4) protein is Pyridoxine/pyridoxamine 5'-phosphate oxidase.